We begin with the raw amino-acid sequence, 456 residues long: Bifunctional protein GlmU (456 aa).

A pyrophosphorylase region spans residues 1-229; sequence MLNSAMSVVI…ISETDGVNNR (229 aa). Residues 11–14, Lys-25, Gln-76, 81–82, 103–105, Gly-140, Glu-154, Asn-169, and Asn-227 contribute to the UDP-N-acetyl-alpha-D-glucosamine site; these read LAAG, GT, and YGD. Asp-105 provides a ligand contact to Mg(2+). Asn-227 is a binding site for Mg(2+). Residues 230–250 form a linker region; it reads LQLSRLERIYQAEQAEKLLLS. The segment at 251–456 is N-acetyltransferase; the sequence is GVMLRDPARF…QGWQRPVKKK (206 aa). Arg-333 and Lys-351 together coordinate UDP-N-acetyl-alpha-D-glucosamine. The active-site Proton acceptor is the His-363. Tyr-366 and Asn-377 together coordinate UDP-N-acetyl-alpha-D-glucosamine. Acetyl-CoA contacts are provided by residues Ala-380, 386–387, Ser-405, Ala-423, and Arg-440; that span reads NY.

This sequence in the N-terminal section; belongs to the N-acetylglucosamine-1-phosphate uridyltransferase family. In the C-terminal section; belongs to the transferase hexapeptide repeat family. In terms of assembly, homotrimer. Mg(2+) serves as cofactor.

It is found in the cytoplasm. The catalysed reaction is alpha-D-glucosamine 1-phosphate + acetyl-CoA = N-acetyl-alpha-D-glucosamine 1-phosphate + CoA + H(+). It catalyses the reaction N-acetyl-alpha-D-glucosamine 1-phosphate + UTP + H(+) = UDP-N-acetyl-alpha-D-glucosamine + diphosphate. It participates in nucleotide-sugar biosynthesis; UDP-N-acetyl-alpha-D-glucosamine biosynthesis; N-acetyl-alpha-D-glucosamine 1-phosphate from alpha-D-glucosamine 6-phosphate (route II): step 2/2. Its pathway is nucleotide-sugar biosynthesis; UDP-N-acetyl-alpha-D-glucosamine biosynthesis; UDP-N-acetyl-alpha-D-glucosamine from N-acetyl-alpha-D-glucosamine 1-phosphate: step 1/1. The protein operates within bacterial outer membrane biogenesis; LPS lipid A biosynthesis. Catalyzes the last two sequential reactions in the de novo biosynthetic pathway for UDP-N-acetylglucosamine (UDP-GlcNAc). The C-terminal domain catalyzes the transfer of acetyl group from acetyl coenzyme A to glucosamine-1-phosphate (GlcN-1-P) to produce N-acetylglucosamine-1-phosphate (GlcNAc-1-P), which is converted into UDP-GlcNAc by the transfer of uridine 5-monophosphate (from uridine 5-triphosphate), a reaction catalyzed by the N-terminal domain. The protein is Bifunctional protein GlmU of Salmonella gallinarum (strain 287/91 / NCTC 13346).